Consider the following 358-residue polypeptide: Feruloyl CoA ortho-hydroxylase F6H1-3 (358 aa).

A Fe2OG dioxygenase domain is found at 200-308; that stretch reads TKESLLMGSK…RISVPIFVNP (109 aa). Y216 contributes to the 2-oxoglutarate binding site. Fe cation contacts are provided by H231, D233, and H289. 2-oxoglutarate-binding residues include R299 and S301.

It belongs to the iron/ascorbate-dependent oxidoreductase family. It depends on L-ascorbate as a cofactor. Fe(2+) serves as cofactor. Mostly expressed in tubers, and, at low levels, in underground stems, stems, leaves and petioles.

It carries out the reaction (E)-feruloyl-CoA + 2-oxoglutarate + O2 = (E)-6-hydroxyferuloyl-CoA + succinate + CO2. Its pathway is phenylpropanoid metabolism. In terms of biological role, 2-oxoglutarate (OG)- and Fe(II)-dependent dioxygenase (2OGD) involved in scopoletin biosynthesis. Converts feruloyl CoA into 6'-hydroxyferuloyl CoA, and, at low efficiency, caffeoyl-CoA into 6'-hydroxycaffeate, but has no activity with p-coumaroyl-CoA. The protein is Feruloyl CoA ortho-hydroxylase F6H1-3 of Ipomoea batatas (Sweet potato).